The following is a 147-amino-acid chain: Sec-independent protein translocase protein TatB (147 aa).

Residues 2 to 22 (FDGIGFMELLLIGVLGLVVLG) form a helical membrane-spanning segment. Positions 85–97 (QLKQAAQSVNRPY) are enriched in polar residues. The interval 85-147 (QLKQAAQSVN…DTRSNPKANG (63 aa)) is disordered. The segment covering 113–133 (ASQSVSTEASPSASSAPTSES) has biased composition (low complexity).

The protein belongs to the TatB family. As to quaternary structure, the Tat system comprises two distinct complexes: a TatABC complex, containing multiple copies of TatA, TatB and TatC subunits, and a separate TatA complex, containing only TatA subunits. Substrates initially bind to the TatABC complex, which probably triggers association of the separate TatA complex to form the active translocon.

Its subcellular location is the cell inner membrane. Part of the twin-arginine translocation (Tat) system that transports large folded proteins containing a characteristic twin-arginine motif in their signal peptide across membranes. Together with TatC, TatB is part of a receptor directly interacting with Tat signal peptides. TatB may form an oligomeric binding site that transiently accommodates folded Tat precursor proteins before their translocation. The polypeptide is Sec-independent protein translocase protein TatB (Shewanella sp. (strain ANA-3)).